Consider the following 181-residue polypeptide: MSSFHATTIFAVQHNGKSAMSGDGQVTFGQAVVMKHTARKVRKLFNGKVLAGFAGSVADAFTLFEMFEAKLEEYNGNLKRASVELAKEWRSDKVLRKLEAMLIVMNQDTLLLVSGTGEVIEPDDGILAIGSGGNYALSAGRALKTYAGENLSAKDIAKAALKIAGEICVYTNDQIILEELE.

Serine 2 is a catalytic residue. Residues glycine 165, cysteine 168, and threonine 171 each contribute to the Na(+) site.

This sequence belongs to the peptidase T1B family. HslV subfamily. A double ring-shaped homohexamer of ClpQ is capped on each side by a ring-shaped ClpY homohexamer. The assembly of the ClpQ/ClpY complex is dependent on binding of ATP.

The protein resides in the cytoplasm. Functionally, protease subunit of a proteasome-like degradation complex. This Bacillus velezensis (strain DSM 23117 / BGSC 10A6 / LMG 26770 / FZB42) (Bacillus amyloliquefaciens subsp. plantarum) protein is ATP-dependent protease subunit ClpQ (clpQ).